The chain runs to 206 residues: Imidazoleglycerol-phosphate dehydratase (206 aa).

The protein belongs to the imidazoleglycerol-phosphate dehydratase family.

It localises to the cytoplasm. The enzyme catalyses D-erythro-1-(imidazol-4-yl)glycerol 3-phosphate = 3-(imidazol-4-yl)-2-oxopropyl phosphate + H2O. It functions in the pathway amino-acid biosynthesis; L-histidine biosynthesis; L-histidine from 5-phospho-alpha-D-ribose 1-diphosphate: step 6/9. The protein is Imidazoleglycerol-phosphate dehydratase of Leptospira interrogans serogroup Icterohaemorrhagiae serovar copenhageni (strain Fiocruz L1-130).